A 447-amino-acid polypeptide reads, in one-letter code: Probable glycine dehydrogenase (decarboxylating) subunit 1 (447 aa).

The protein belongs to the GcvP family. N-terminal subunit subfamily. In terms of assembly, the glycine cleavage system is composed of four proteins: P, T, L and H. In this organism, the P 'protein' is a heterodimer of two subunits.

The enzyme catalyses N(6)-[(R)-lipoyl]-L-lysyl-[glycine-cleavage complex H protein] + glycine + H(+) = N(6)-[(R)-S(8)-aminomethyldihydrolipoyl]-L-lysyl-[glycine-cleavage complex H protein] + CO2. In terms of biological role, the glycine cleavage system catalyzes the degradation of glycine. The P protein binds the alpha-amino group of glycine through its pyridoxal phosphate cofactor; CO(2) is released and the remaining methylamine moiety is then transferred to the lipoamide cofactor of the H protein. The sequence is that of Probable glycine dehydrogenase (decarboxylating) subunit 1 from Maricaulis maris (strain MCS10) (Caulobacter maris).